The sequence spans 637 residues: Chaperone protein HtpG (637 aa).

The interval 1 to 345 is a; substrate-binding; it reads MSQQETHGFQ…SNDLPLNVSR (345 aa). The b stretch occupies residues 346–562; sequence EILQDNHITK…EGEMSSQMIK (217 aa). Positions 563–637 are c; that stretch reads LMQAAGQPVP…MNQMLLANLK (75 aa).

It belongs to the heat shock protein 90 family. In terms of assembly, homodimer.

Its subcellular location is the cytoplasm. Its function is as follows. Molecular chaperone. Has ATPase activity. The polypeptide is Chaperone protein HtpG (Shewanella sp. (strain ANA-3)).